We begin with the raw amino-acid sequence, 149 residues long: MKIINILFCLFLLLLNSCNSNDNDTLKNNAQQTKSRGKRDLTQKEATPEKPKSKEELLREKLSEDQKTHLDWLKEALGNDGEFDKFLGYDESKIKSALNHIKSELDKCTGDNSEQQKSTFKQTVQGFFSGGNIDNFANNAVSNCNNGGS.

Residues Met-1–Ser-17 form the signal peptide. The N-palmitoyl cysteine moiety is linked to residue Cys-18. Cys-18 is lipidated: S-diacylglycerol cysteine. The tract at residues Leu-26 to Leu-58 is disordered. Residues Lys-38–Leu-58 show a composition bias toward basic and acidic residues.

Belongs to the Multicopy lipoprotein (Mlp) family.

Its subcellular location is the cell outer membrane. Its function is as follows. An outer membrane protein that may participate in pathogenesis. Some human Lyme disease patients have antibodies against this protein. The Mlp proteins probably undergo intragenic recombination, generating new alleles. This chain is Lipoprotein MlpF, found in Borreliella burgdorferi (strain ATCC 35210 / DSM 4680 / CIP 102532 / B31) (Borrelia burgdorferi).